A 342-amino-acid chain; its full sequence is Heat-inducible transcription repressor HrcA (342 aa).

This sequence belongs to the HrcA family.

Functionally, negative regulator of class I heat shock genes (grpE-dnaK-dnaJ and groELS operons). Prevents heat-shock induction of these operons. The protein is Heat-inducible transcription repressor HrcA of Leptospira borgpetersenii serovar Hardjo-bovis (strain JB197).